The chain runs to 232 residues: Uracil-DNA glycosylase (232 aa).

The active-site Proton acceptor is the aspartate 64.

Belongs to the uracil-DNA glycosylase (UDG) superfamily. UNG family.

Its subcellular location is the cytoplasm. It catalyses the reaction Hydrolyzes single-stranded DNA or mismatched double-stranded DNA and polynucleotides, releasing free uracil.. Functionally, excises uracil residues from the DNA which can arise as a result of misincorporation of dUMP residues by DNA polymerase or due to deamination of cytosine. The chain is Uracil-DNA glycosylase from Shouchella clausii (strain KSM-K16) (Alkalihalobacillus clausii).